We begin with the raw amino-acid sequence, 858 residues long: DNA mismatch repair protein MutS (858 aa).

Residue 613–620 (GPNMAGKS) participates in ATP binding.

It belongs to the DNA mismatch repair MutS family.

Its function is as follows. This protein is involved in the repair of mismatches in DNA. It is possible that it carries out the mismatch recognition step. This protein has a weak ATPase activity. The chain is DNA mismatch repair protein MutS from Dehalococcoides mccartyi (strain ATCC BAA-2100 / JCM 16839 / KCTC 5957 / BAV1).